We begin with the raw amino-acid sequence, 202 residues long: Glycerol-3-phosphate acyltransferase (202 aa).

4 helical membrane-spanning segments follow: residues 11-31 (VLIA…GLIL), 87-107 (PALA…WLGF), 116-136 (FIGV…AIWL), and 158-178 (LILW…LAAL).

It belongs to the PlsY family. In terms of assembly, probably interacts with PlsX.

It is found in the cell inner membrane. The catalysed reaction is an acyl phosphate + sn-glycerol 3-phosphate = a 1-acyl-sn-glycero-3-phosphate + phosphate. The protein operates within lipid metabolism; phospholipid metabolism. In terms of biological role, catalyzes the transfer of an acyl group from acyl-phosphate (acyl-PO(4)) to glycerol-3-phosphate (G3P) to form lysophosphatidic acid (LPA). This enzyme utilizes acyl-phosphate as fatty acyl donor, but not acyl-CoA or acyl-ACP. This is Glycerol-3-phosphate acyltransferase from Methylorubrum extorquens (strain PA1) (Methylobacterium extorquens).